The chain runs to 450 residues: Tubulin alpha chain, testis-specific (450 aa).

The MREC motif motif lies at 1-4 (MREC). Gln11 contacts GTP. Position 40 is an N6-acetyllysine (Lys40). 7 residues coordinate GTP: Glu71, Ser140, Gly144, Thr145, Thr179, Asn206, and Asn228. Glu71 contacts Mg(2+). The active site involves Glu254.

This sequence belongs to the tubulin family. In terms of assembly, dimer of alpha and beta chains. A typical microtubule is a hollow water-filled tube with an outer diameter of 25 nm and an inner diameter of 15 nM. Alpha-beta heterodimers associate head-to-tail to form protofilaments running lengthwise along the microtubule wall with the beta-tubulin subunit facing the microtubule plus end conferring a structural polarity. Microtubules usually have 13 protofilaments but different protofilament numbers can be found in some organisms and specialized cells. Mg(2+) serves as cofactor. Some glutamate residues at the C-terminus are polyglycylated, resulting in polyglycine chains on the gamma-carboxyl group. Glycylation is mainly limited to tubulin incorporated into axonemes (cilia and flagella) whereas glutamylation is prevalent in neuronal cells, centrioles, axonemes, and the mitotic spindle. Both modifications can coexist on the same protein on adjacent residues, and lowering polyglycylation levels increases polyglutamylation, and reciprocally. The precise function of polyglycylation is still unclear. In terms of processing, some glutamate residues at the C-terminus are polyglutamylated, resulting in polyglutamate chains on the gamma-carboxyl group. Polyglutamylation plays a key role in microtubule severing by spastin (SPAST). SPAST preferentially recognizes and acts on microtubules decorated with short polyglutamate tails: severing activity by SPAST increases as the number of glutamates per tubulin rises from one to eight, but decreases beyond this glutamylation threshold. Post-translationally, acetylation of alpha chains at Lys-40 is located inside the microtubule lumen. This modification has been correlated with increased microtubule stability, intracellular transport and ciliary assembly. Undergoes a tyrosination/detyrosination cycle, the cyclic removal and re-addition of a C-terminal tyrosine residue by the enzymes tubulin tyrosine carboxypeptidase (MATCAP, VASH1 or VASH2) and tubulin tyrosine ligase (TTL), respectively. In terms of processing, tyrosination promotes microtubule interaction with CAP-Gly microtubule plus-end tracking proteins. Tyrosinated tubulins regulate the initiation of dynein-driven motility. Post-translationally, detyrosination is involved in metaphase plate congression by guiding chromosomes during mitosis. Detyrosination increases microtubules-dependent mechanotransduction in dystrophic cardiac and skeletal muscle. In cardiomyocytes, detyrosinated microtubules are required to resist to contractile compression during contraction. As to expression, testis specific.

It localises to the cytoplasm. The protein resides in the cytoskeleton. The catalysed reaction is GTP + H2O = GDP + phosphate + H(+). In terms of biological role, tubulin is the major constituent of microtubules, a cylinder consisting of laterally associated linear protofilaments composed of alpha- and beta-tubulin heterodimers. Microtubules grow by the addition of GTP-tubulin dimers to the microtubule end, where a stabilizing cap forms. Below the cap, tubulin dimers are in GDP-bound state, owing to GTPase activity of alpha-tubulin. In Oncorhynchus mykiss (Rainbow trout), this protein is Tubulin alpha chain, testis-specific.